A 148-amino-acid polypeptide reads, in one-letter code: Large ribosomal subunit protein bL9 (148 aa).

It belongs to the bacterial ribosomal protein bL9 family.

In terms of biological role, binds to the 23S rRNA. The sequence is that of Large ribosomal subunit protein bL9 from Hahella chejuensis (strain KCTC 2396).